A 100-amino-acid chain; its full sequence is UPF0125 protein CV_3462 (100 aa).

This sequence belongs to the UPF0125 (RnfH) family.

In Chromobacterium violaceum (strain ATCC 12472 / DSM 30191 / JCM 1249 / CCUG 213 / NBRC 12614 / NCIMB 9131 / NCTC 9757 / MK), this protein is UPF0125 protein CV_3462.